The primary structure comprises 957 residues: Ribonuclease 3-like protein 3 (957 aa).

Positions 4 to 142 constitute an RNase III 1 domain; sequence VEAVEKILNY…IAATVFIDVN (139 aa). Residues 307-382 form the DRBM 1 domain; the sequence is NGRGELIEIC…AYHMIRALES (76 aa). The region spanning 415 to 551 is the RNase III 2 domain; that stretch reads VEAVEKILNY…VAGAVYIDVK (137 aa). 2 consecutive DRBM domains span residues 566 to 645 and 837 to 912; these read EPIY…KLSE and DEKG…ALES.

Ribonuclease that cleaves double-stranded RNA (dsRNA). This is Ribonuclease 3-like protein 3 (RTL3) from Arabidopsis thaliana (Mouse-ear cress).